Consider the following 226-residue polypeptide: Ribonuclease 3 (226 aa).

One can recognise an RNase III domain in the interval 2–129 (IESISKIIKY…LIGAIYLDGG (128 aa)). Glu42 is a binding site for Mg(2+). The active site involves Asp46. Positions 115 and 118 each coordinate Mg(2+). Glu118 is a catalytic residue. Residues 154–223 (DAKTILQELV…ASLMLNQIHN (70 aa)) form the DRBM domain.

This sequence belongs to the ribonuclease III family. Homodimer. Mg(2+) is required as a cofactor.

The protein resides in the cytoplasm. It carries out the reaction Endonucleolytic cleavage to 5'-phosphomonoester.. In terms of biological role, digests double-stranded RNA. Involved in the processing of primary rRNA transcript to yield the immediate precursors to the large and small rRNAs (23S and 16S). Processes some mRNAs, and tRNAs when they are encoded in the rRNA operon. Processes pre-crRNA and tracrRNA of type II CRISPR loci if present in the organism. The polypeptide is Ribonuclease 3 (Ehrlichia chaffeensis (strain ATCC CRL-10679 / Arkansas)).